The sequence spans 67 residues: Coiled-coil domain-containing protein 179 (67 aa).

Disordered stretches follow at residues 1-32 and 47-67; these read MCLRVKDEEPAQVYPEGPRRHHPSDVSTRQSV and RKLGKRFARPNPIPDTGILWT. Positions 27–53 form a coiled coil; that stretch reads STRQSVEKRINYMQNLQKEKRKLGKRF.

The chain is Coiled-coil domain-containing protein 179 (Ccdc179) from Mus musculus (Mouse).